Consider the following 425-residue polypeptide: Serine--tRNA ligase (425 aa).

231 to 233 (TAE) contacts L-serine. An ATP-binding site is contributed by 262-264 (RSE). Residue Glu285 participates in L-serine binding. Residue 349–352 (EISS) coordinates ATP. Residue Ser385 coordinates L-serine.

The protein belongs to the class-II aminoacyl-tRNA synthetase family. Type-1 seryl-tRNA synthetase subfamily. Homodimer. The tRNA molecule binds across the dimer.

The protein resides in the cytoplasm. It carries out the reaction tRNA(Ser) + L-serine + ATP = L-seryl-tRNA(Ser) + AMP + diphosphate + H(+). The catalysed reaction is tRNA(Sec) + L-serine + ATP = L-seryl-tRNA(Sec) + AMP + diphosphate + H(+). It participates in aminoacyl-tRNA biosynthesis; selenocysteinyl-tRNA(Sec) biosynthesis; L-seryl-tRNA(Sec) from L-serine and tRNA(Sec): step 1/1. In terms of biological role, catalyzes the attachment of serine to tRNA(Ser). Is also able to aminoacylate tRNA(Sec) with serine, to form the misacylated tRNA L-seryl-tRNA(Sec), which will be further converted into selenocysteinyl-tRNA(Sec). The protein is Serine--tRNA ligase of Maricaulis maris (strain MCS10) (Caulobacter maris).